A 153-amino-acid chain; its full sequence is Transcriptional repressor NrdR (153 aa).

A zinc finger lies at 3–34 (CPSCFHNGTRVLDSRPVDEGRSIRRRRECESC). One can recognise an ATP-cone domain in the interval 49–139 (LIVVKKEGTR…VYRQFKDLNV (91 aa)).

The protein belongs to the NrdR family. Requires Zn(2+) as cofactor.

Negatively regulates transcription of bacterial ribonucleotide reductase nrd genes and operons by binding to NrdR-boxes. This Bacillus mycoides (strain KBAB4) (Bacillus weihenstephanensis) protein is Transcriptional repressor NrdR.